A 706-amino-acid polypeptide reads, in one-letter code: Melanopsin (706 aa).

Over 1-86 (MTEIPSFQPP…VWDIPPLAHY (86 aa)) the chain is Extracellular. N-linked (GlcNAc...) asparagine glycosylation is found at Asn12, Asn64, and Asn69. Residues 87–107 (IVGTAVFCIGCCGMFGNAVVV) form a helical membrane-spanning segment. Residues 108–121 (YSFIKSKGLRTPAN) are Cytoplasmic-facing. A helical transmembrane segment spans residues 122-142 (FFIINLALSDFLMNLTNMPIF). The Extracellular segment spans residues 143 to 159 (AVNSAFQRWLLSDFACE). Cysteines 158 and 236 form a disulfide. A helical membrane pass occupies residues 160–180 (LYGFAGGLFGCLSINTLMAIS). Residues 181–201 (MDRYLVITKPFLVMRIVTKQR) are Cytoplasmic-facing. Residues 202-222 (VMFAILLLWIWSLVWALPPLF) traverse the membrane as a helical segment. Residues 223–248 (GWSAYVSEGFGTSCTFDYMTPKLSYH) are Extracellular-facing. The chain crosses the membrane as a helical span at residues 249–269 (IFTYIIFFTMYFIPGGVMIYC). The Cytoplasmic segment spans residues 270–314 (YYNIFATVKSGDKQFGKAVKEMAHEDVKNKAQQERQRKNEIKTAK). Residues 315–335 (IAFIVISLFMSAWTPYAVVSA) form a helical membrane-spanning segment. The Extracellular portion of the chain corresponds to 336 to 351 (LGTLGYQDLVTPYLQS). A helical transmembrane segment spans residues 352–372 (IPAMFAKSSAVYSPIVYAITY). Lys358 is subject to N6-(retinylidene)lysine. At 373 to 706 (PKFREAVKKH…LSEAHDETVL (334 aa)) the chain is on the cytoplasmic side. 3 disordered regions span residues 393-446 (SEEE…RQDT), 571-599 (RTES…SFNT), and 630-658 (QSSE…NETE). Composition is skewed to low complexity over residues 404-418 (QSSA…QTTA) and 426-442 (SVDS…SGVS). The span at 571 to 593 (RTESGYDRSQDSQRKKVVGDTHR) shows a compositional bias: basic and acidic residues. Positions 645-658 (GITEVDTDSENETE) are enriched in acidic residues.

It belongs to the G-protein coupled receptor 1 family. Opsin subfamily. In terms of tissue distribution, expressed in Joseph cells and photoreceptor cells of the dorsal ocelli.

The protein localises to the cell membrane. Functionally, photoreceptor implicated in non-image-forming responses to light. Photoisomerizes covalently bound all-trans retinal back to 11-cis retinal. Most likely coupled to the G(q) signaling cascade. In Branchiostoma belcheri (Amphioxus), this protein is Melanopsin.